Here is a 598-residue protein sequence, read N- to C-terminus: Movement protein Hsp70h (598 aa).

The protein belongs to the heat shock protein 70 family. As to quaternary structure, homomultimer. Interacts with p20. This interaction allows the docking of the latter to the virion.

It localises to the virion. The protein localises to the host cell junction. Its subcellular location is the host plasmodesma. Functionally, transports viral genome to neighboring plant cells directly through plasmosdesmata, without any budding. The movement protein allows efficient cell to cell propagation, by bypassing the host cell wall barrier. Two movement proteins, p6, Hsp70h and three structural proteins, CP, CPm, and P64 are essential for cell-cell movement. Also plays a role in virion formation. Together with CPm and p64, encapsidates the 5'-terminal portion of the viral genome. The sequence is that of Movement protein Hsp70h from Beta vulgaris (Sugar beet).